A 128-amino-acid polypeptide reads, in one-letter code: Sulfurtransferase TusD (128 aa).

C78 functions as the Cysteine persulfide intermediate in the catalytic mechanism.

This sequence belongs to the DsrE/TusD family. Heterohexamer, formed by a dimer of trimers. The hexameric TusBCD complex contains 2 copies each of TusB, TusC and TusD. The TusBCD complex interacts with TusE.

The protein localises to the cytoplasm. Part of a sulfur-relay system required for 2-thiolation of 5-methylaminomethyl-2-thiouridine (mnm(5)s(2)U) at tRNA wobble positions. Accepts sulfur from TusA and transfers it in turn to TusE. This chain is Sulfurtransferase TusD, found in Shigella dysenteriae serotype 1 (strain Sd197).